A 1141-amino-acid polypeptide reads, in one-letter code: Isoleucine--tRNA ligase, cytoplasmic (1141 aa).

The 'HIGH' region motif lies at 50-60 (PFATGLPHYGH). Residues 601 to 605 (KMSKS) carry the 'KMSKS' region motif. Lys-604 is an ATP binding site.

The protein belongs to the class-I aminoacyl-tRNA synthetase family.

The protein resides in the cytoplasm. The enzyme catalyses tRNA(Ile) + L-isoleucine + ATP = L-isoleucyl-tRNA(Ile) + AMP + diphosphate. The sequence is that of Isoleucine--tRNA ligase, cytoplasmic from Caenorhabditis elegans.